The chain runs to 355 residues: 3-dehydroquinate synthase (355 aa).

NAD(+)-binding positions include 69-74 (DGEQHK), 103-107 (GVIGD), 127-128 (TT), lysine 140, lysine 149, and 167-170 (TLQT). The Zn(2+) site is built by glutamate 182, histidine 245, and histidine 262.

It belongs to the sugar phosphate cyclases superfamily. Dehydroquinate synthase family. It depends on Co(2+) as a cofactor. The cofactor is Zn(2+). NAD(+) serves as cofactor.

Its subcellular location is the cytoplasm. The catalysed reaction is 7-phospho-2-dehydro-3-deoxy-D-arabino-heptonate = 3-dehydroquinate + phosphate. The protein operates within metabolic intermediate biosynthesis; chorismate biosynthesis; chorismate from D-erythrose 4-phosphate and phosphoenolpyruvate: step 2/7. Its function is as follows. Catalyzes the conversion of 3-deoxy-D-arabino-heptulosonate 7-phosphate (DAHP) to dehydroquinate (DHQ). This chain is 3-dehydroquinate synthase, found in Pseudoalteromonas atlantica (strain T6c / ATCC BAA-1087).